The chain runs to 184 residues: Photosystem I assembly protein Ycf4 (184 aa).

The next 2 helical transmembrane spans lie at 21–41 and 63–83; these read YFWATIILLGGLSFFLVGLSS and IIMTFYGTAAILISLFLWLTI.

Belongs to the Ycf4 family.

It localises to the plastid. The protein resides in the chloroplast thylakoid membrane. Functionally, seems to be required for the assembly of the photosystem I complex. In Gracilaria tenuistipitata var. liui (Red alga), this protein is Photosystem I assembly protein Ycf4.